A 364-amino-acid polypeptide reads, in one-letter code: Chorismate synthase (364 aa).

Arg-48 and Arg-54 together coordinate NADP(+). Residues 125 to 127 (RSS), 238 to 239 (NA), Gly-278, 293 to 297 (KPTSS), and Arg-319 contribute to the FMN site.

Belongs to the chorismate synthase family. In terms of assembly, homotetramer. The cofactor is FMNH2.

The catalysed reaction is 5-O-(1-carboxyvinyl)-3-phosphoshikimate = chorismate + phosphate. Its pathway is metabolic intermediate biosynthesis; chorismate biosynthesis; chorismate from D-erythrose 4-phosphate and phosphoenolpyruvate: step 7/7. Functionally, catalyzes the anti-1,4-elimination of the C-3 phosphate and the C-6 proR hydrogen from 5-enolpyruvylshikimate-3-phosphate (EPSP) to yield chorismate, which is the branch point compound that serves as the starting substrate for the three terminal pathways of aromatic amino acid biosynthesis. This reaction introduces a second double bond into the aromatic ring system. In Shewanella loihica (strain ATCC BAA-1088 / PV-4), this protein is Chorismate synthase.